The following is a 155-amino-acid chain: 3-dehydroquinate dehydratase (155 aa).

Catalysis depends on Tyr-22, which acts as the Proton acceptor. Residues Asn-73, His-79, and Asp-86 each coordinate substrate. His-99 functions as the Proton donor in the catalytic mechanism. Residues 100–101 and Arg-110 contribute to the substrate site; that span reads IS.

It belongs to the type-II 3-dehydroquinase family. Homododecamer.

It carries out the reaction 3-dehydroquinate = 3-dehydroshikimate + H2O. The protein operates within metabolic intermediate biosynthesis; chorismate biosynthesis; chorismate from D-erythrose 4-phosphate and phosphoenolpyruvate: step 3/7. Its function is as follows. Catalyzes a trans-dehydration via an enolate intermediate. The polypeptide is 3-dehydroquinate dehydratase (Campylobacter hominis (strain ATCC BAA-381 / DSM 21671 / CCUG 45161 / LMG 19568 / NCTC 13146 / CH001A)).